The primary structure comprises 338 residues: MALQRRTTLTKYLIEQQRETNNLPADLRLLIEVVARACKAISYHVSKGALGDALGTAGSENVQGEVQKKLDILSNEILLEANEWGGNLAGMASEEMEQFFPIPANYPKGEYLLVFDPLDGSSNIDVNVSIGTIFSVLRCPDGQQPTEQSFLQPGTQQVAAGYAVYGPQTVLVLTTGNGVNCFTLDRELGSWVLTQSDMRIPVETREYAINASNERHWYPPVQQYIGELKDGKEGSRQSDFNMRWIASMVADVHRILNRGGIFMYPADKRTPDKPGKLRLMYEANPMAFIVEQAGGAATNGEKRILDIQPKSLHERVAVFLGSKNEVDRVTRYHLETKK.

Mg(2+) contacts are provided by Glu-94, Asp-116, Leu-118, and Asp-119. Substrate is bound by residues 119-122, Asn-210, and Lys-276; that span reads DGSS. Glu-282 is a binding site for Mg(2+).

This sequence belongs to the FBPase class 1 family. Homotetramer. It depends on Mg(2+) as a cofactor.

Its subcellular location is the cytoplasm. It catalyses the reaction beta-D-fructose 1,6-bisphosphate + H2O = beta-D-fructose 6-phosphate + phosphate. It participates in carbohydrate biosynthesis; gluconeogenesis. The chain is Fructose-1,6-bisphosphatase class 1 1 from Paraburkholderia xenovorans (strain LB400).